The chain runs to 511 residues: Putative thymidine phosphorylase (511 aa).

This sequence belongs to the thymidine/pyrimidine-nucleoside phosphorylase family. Type 2 subfamily.

The catalysed reaction is thymidine + phosphate = 2-deoxy-alpha-D-ribose 1-phosphate + thymine. The protein is Putative thymidine phosphorylase of Bradyrhizobium sp. (strain BTAi1 / ATCC BAA-1182).